The primary structure comprises 424 residues: MKPSLFKSLYFQVLAAIAIGVLLGHFNPELGAQMKPLGDGFVKLIKMIIAPVIFCTVVSGIAGMESMKAVGRTGAVALIYFEVVSTIALIIGLVVVNVLQPGAGMNVDPATLDAKAVAMYAQQAEQQGVVAFLLDVIPGSVIGAFASGNILQVLLFAILFGFALHRMGDKGTLVFNFIDSFSHVFFGIINMIMRLAPVGAFGAMAFTIGKYGVGSLVQLGQLIVCFYITCLLFVVVVLGLIARVVGFNIFKFIAYIKEELLIVLGTSSSESALPRMLAKMENLGCKKSVVGLVIPTGYSFNLDGTSIYLTMAAVFIAQATNSHMDIWHQITLLVVLLLSSKGAAGVTGSGFIVLAATLSAVGHLPVAGLALILGIDRFMSEARALTNLVGNGVATLVVAKWVGQLDEKKLKEQLVHRKNEVKSV.

8 consecutive transmembrane segments (helical) span residues 4–24 (SLFK…VLLG), 44–64 (LIKM…IAGM), 76–96 (VALI…LVVV), 142–162 (IGAF…LFGF), 184–206 (VFFG…AMAF), 222–242 (LIVC…GLIA), 326–346 (IWHQ…AAGV), and 352–372 (IVLA…LALI).

Belongs to the dicarboxylate/amino acid:cation symporter (DAACS) (TC 2.A.23) family.

The protein resides in the cell inner membrane. Functionally, responsible for the transport of dicarboxylates such as succinate, fumarate, and malate from the periplasm across the membrane. This Erwinia tasmaniensis (strain DSM 17950 / CFBP 7177 / CIP 109463 / NCPPB 4357 / Et1/99) protein is C4-dicarboxylate transport protein.